A 251-amino-acid chain; its full sequence is Probable transcriptional regulatory protein Amuc_0709 (251 aa).

It belongs to the TACO1 family.

The protein resides in the cytoplasm. The sequence is that of Probable transcriptional regulatory protein Amuc_0709 from Akkermansia muciniphila (strain ATCC BAA-835 / DSM 22959 / JCM 33894 / BCRC 81048 / CCUG 64013 / CIP 107961 / Muc).